The primary structure comprises 616 residues: Dihydroxy-acid dehydratase (616 aa).

D81 serves as a coordination point for Mg(2+). Residue C122 coordinates [2Fe-2S] cluster. Mg(2+)-binding residues include D123 and K124. Position 124 is an N6-carboxylysine (K124). Residue C195 participates in [2Fe-2S] cluster binding. E491 contributes to the Mg(2+) binding site. The active-site Proton acceptor is S517.

It belongs to the IlvD/Edd family. As to quaternary structure, homodimer. It depends on [2Fe-2S] cluster as a cofactor. Requires Mg(2+) as cofactor.

It carries out the reaction (2R)-2,3-dihydroxy-3-methylbutanoate = 3-methyl-2-oxobutanoate + H2O. The catalysed reaction is (2R,3R)-2,3-dihydroxy-3-methylpentanoate = (S)-3-methyl-2-oxopentanoate + H2O. The protein operates within amino-acid biosynthesis; L-isoleucine biosynthesis; L-isoleucine from 2-oxobutanoate: step 3/4. It functions in the pathway amino-acid biosynthesis; L-valine biosynthesis; L-valine from pyruvate: step 3/4. Its function is as follows. Functions in the biosynthesis of branched-chain amino acids. Catalyzes the dehydration of (2R,3R)-2,3-dihydroxy-3-methylpentanoate (2,3-dihydroxy-3-methylvalerate) into 2-oxo-3-methylpentanoate (2-oxo-3-methylvalerate) and of (2R)-2,3-dihydroxy-3-methylbutanoate (2,3-dihydroxyisovalerate) into 2-oxo-3-methylbutanoate (2-oxoisovalerate), the penultimate precursor to L-isoleucine and L-valine, respectively. The protein is Dihydroxy-acid dehydratase of Salmonella paratyphi C (strain RKS4594).